The chain runs to 216 residues: Maleylacetoacetate isomerase (216 aa).

Position 1 is an N-acetylmethionine (methionine 1). Residues 4–87 (GKPILYSYFR…YLEETRPIPR (84 aa)) form the GST N-terminal domain. Residues 14–19 (SSCSWR) and glutamine 45 contribute to the glutathione site. At lysine 57 the chain carries N6-succinyllysine. Glutathione contacts are provided by residues valine 59, 71-72 (QS), glutamine 111, and 115-117 (NLS). In terms of domain architecture, GST C-terminal spans 92–212 (DPQKRAIVRM…HPRRQPDTPA (121 aa)). Phosphothreonine is present on threonine 136. Serine 137 is modified (phosphoserine). Lysine 177 bears the N6-succinyllysine mark. Phosphoserine is present on serine 181.

The protein belongs to the GST superfamily. Zeta family. Homodimer. The cofactor is glutathione. Expressed in liver, kidney, seminal glands and breast.

The protein resides in the cytoplasm. It catalyses the reaction 4-maleylacetoacetate = 4-fumarylacetoacetate. The enzyme catalyses RX + glutathione = an S-substituted glutathione + a halide anion + H(+). It functions in the pathway amino-acid degradation; L-phenylalanine degradation; acetoacetate and fumarate from L-phenylalanine: step 5/6. Probable bifunctional enzyme showing minimal glutathione-conjugating activity with ethacrynic acid and 7-chloro-4-nitrobenz-2-oxa-1, 3-diazole and maleylacetoacetate isomerase activity. Also has low glutathione peroxidase activity with t-butyl and cumene hydroperoxides. Is able to catalyze the glutathione dependent oxygenation of dichloroacetic acid to glyoxylic acid. The polypeptide is Maleylacetoacetate isomerase (Gstz1) (Mus musculus (Mouse)).